A 667-amino-acid chain; its full sequence is DNA ligase (667 aa).

NAD(+)-binding positions include 32 to 36 (DSEYD), 81 to 82 (SL), and Glu-110. Lys-112 functions as the N6-AMP-lysine intermediate in the catalytic mechanism. Residues Arg-133, Glu-167, Lys-283, and Lys-307 each contribute to the NAD(+) site. The Zn(2+) site is built by Cys-401, Cys-404, Cys-419, and Cys-424. A BRCT domain is found at 586 to 667 (EGHPEFSGKT…FVDKQNELNS (82 aa)).

It belongs to the NAD-dependent DNA ligase family. LigA subfamily. The cofactor is Mg(2+). Requires Mn(2+) as cofactor.

It carries out the reaction NAD(+) + (deoxyribonucleotide)n-3'-hydroxyl + 5'-phospho-(deoxyribonucleotide)m = (deoxyribonucleotide)n+m + AMP + beta-nicotinamide D-nucleotide.. Functionally, DNA ligase that catalyzes the formation of phosphodiester linkages between 5'-phosphoryl and 3'-hydroxyl groups in double-stranded DNA using NAD as a coenzyme and as the energy source for the reaction. It is essential for DNA replication and repair of damaged DNA. In Staphylococcus aureus (strain USA300), this protein is DNA ligase.